The chain runs to 450 residues: Divalent metal cation transporter MntH (450 aa).

Transmembrane regions (helical) follow at residues 34–54, 61–81, 108–128, 141–161, 170–190, 212–232, 263–283, 305–325, 361–381, 383–403, and 422–442; these read LSFL…GNWI, AQYG…AMLL, IAII…IAEV, IPLI…LFIM, AIVG…VYIS, GILY…NLYL, IQLS…ASLF, PVLG…ALLA, SLAV…AAKI, QLLV…LIPL, and VNII…YLIV.

Belongs to the NRAMP family.

Its subcellular location is the cell membrane. H(+)-stimulated, divalent metal cation uptake system. The sequence is that of Divalent metal cation transporter MntH from Staphylococcus aureus (strain Mu3 / ATCC 700698).